A 458-amino-acid polypeptide reads, in one-letter code: GDP-fucose protein O-fucosyltransferase 3 (458 aa).

Topologically, residues 1–11 are cytoplasmic; sequence MRRISVKKLCS. A helical; Signal-anchor for type II membrane protein transmembrane segment spans residues 12–32; the sequence is FCLCACAFAFLVMTFQVIELL. Residues 33–458 are Lumenal-facing; it reads GQFEQTEHRQ…TQFWREVFTD (426 aa). 3 N-linked (GlcNAc...) asparagine glycosylation sites follow: asparagine 92, asparagine 150, and asparagine 300. Cysteines 371 and 374 form a disulfide. N-linked (GlcNAc...) asparagine glycosylation occurs at asparagine 445.

The protein belongs to the glycosyltransferase 10 family.

The protein localises to the endoplasmic reticulum membrane. The catalysed reaction is L-threonyl-[protein] + GDP-beta-L-fucose = 3-O-(alpha-L-fucosyl)-L-threonyl-[protein] + GDP + H(+). The enzyme catalyses L-seryl-[protein] + GDP-beta-L-fucose = 3-O-(alpha-L-fucosyl)-L-seryl-[protein] + GDP + H(+). It participates in protein modification; protein glycosylation. Its function is as follows. Protein O-fucosyltransferase that specifically catalyzes O-fucosylation of serine or threonine residues in EMI domains of target proteins. Attaches fucose through an O-glycosidic linkage. O-fucosylation of EMI domain-containing proteins may be required for facilitating protein folding and secretion. The protein is GDP-fucose protein O-fucosyltransferase 3 (fut10) of Danio rerio (Zebrafish).